A 378-amino-acid chain; its full sequence is MLVIGLMSGTSVDGIDTALVEISGTVESPQVQLLAGETYPYSPRLRETILQVCGGEKLSIEALASLDDNIAAEFAQAALNIQKEAPKAQLIGSHGQTVFHRPPANDRLGYTVQLGRGAAIAKITRIPTISNFRAADIAQAGHGAPLVPKIDAYLLSHPTKTRCVQNIGGIGNLTYLPPRQRENWQQKIFGWDTGPGNVLIDLAVQFLSQGQQTYDHNGQWSAQGQPCSELVHKWLQEPYFQQYPPKSTGRELFSPAYLAQLREDAQAYCLSDADWLASLTDLTAISIAHSYQTFLPEMPAEVLLCGGGARNAYLRQRLLAHLGSNVKLLTTDEVGLNSDFKEAIAFALLAYWRWHNFPGNLPQVTGAKAAVLLGEIYR.

Residue 9 to 16 participates in ATP binding; that stretch reads GTSVDGID.

Belongs to the anhydro-N-acetylmuramic acid kinase family.

The enzyme catalyses 1,6-anhydro-N-acetyl-beta-muramate + ATP + H2O = N-acetyl-D-muramate 6-phosphate + ADP + H(+). It functions in the pathway amino-sugar metabolism; 1,6-anhydro-N-acetylmuramate degradation. Its pathway is cell wall biogenesis; peptidoglycan recycling. In terms of biological role, catalyzes the specific phosphorylation of 1,6-anhydro-N-acetylmuramic acid (anhMurNAc) with the simultaneous cleavage of the 1,6-anhydro ring, generating MurNAc-6-P. Is required for the utilization of anhMurNAc either imported from the medium or derived from its own cell wall murein, and thus plays a role in cell wall recycling. The chain is Anhydro-N-acetylmuramic acid kinase from Microcystis aeruginosa (strain NIES-843 / IAM M-2473).